Here is a 240-residue protein sequence, read N- to C-terminus: Lactate utilization protein C (240 aa).

The protein belongs to the LutC/YkgG family.

Functionally, is involved in L-lactate degradation and allows cells to grow with lactate as the sole carbon source. The protein is Lactate utilization protein C of Geobacillus kaustophilus (strain HTA426).